Consider the following 156-residue polypeptide: 6,7-dimethyl-8-ribityllumazine synthase (156 aa).

Residues phenylalanine 25, 59–61 (AWE), and 83–85 (AVI) each bind 5-amino-6-(D-ribitylamino)uracil. (2S)-2-hydroxy-3-oxobutyl phosphate is bound at residue 88 to 89 (ST). The active-site Proton donor is the histidine 91. Residue asparagine 116 participates in 5-amino-6-(D-ribitylamino)uracil binding. Arginine 130 contacts (2S)-2-hydroxy-3-oxobutyl phosphate.

It belongs to the DMRL synthase family. As to quaternary structure, forms an icosahedral capsid composed of 60 subunits, arranged as a dodecamer of pentamers.

It catalyses the reaction (2S)-2-hydroxy-3-oxobutyl phosphate + 5-amino-6-(D-ribitylamino)uracil = 6,7-dimethyl-8-(1-D-ribityl)lumazine + phosphate + 2 H2O + H(+). It participates in cofactor biosynthesis; riboflavin biosynthesis; riboflavin from 2-hydroxy-3-oxobutyl phosphate and 5-amino-6-(D-ribitylamino)uracil: step 1/2. In terms of biological role, catalyzes the formation of 6,7-dimethyl-8-ribityllumazine by condensation of 5-amino-6-(D-ribitylamino)uracil with 3,4-dihydroxy-2-butanone 4-phosphate. This is the penultimate step in the biosynthesis of riboflavin. This is 6,7-dimethyl-8-ribityllumazine synthase from Acinetobacter baumannii (strain AB0057).